We begin with the raw amino-acid sequence, 221 residues long: Ribosomal RNA small subunit methyltransferase G (221 aa).

S-adenosyl-L-methionine contacts are provided by residues glycine 89, leucine 94, 140–141 (VE), and arginine 154.

The protein belongs to the methyltransferase superfamily. RNA methyltransferase RsmG family.

It is found in the cytoplasm. The catalysed reaction is guanosine(527) in 16S rRNA + S-adenosyl-L-methionine = N(7)-methylguanosine(527) in 16S rRNA + S-adenosyl-L-homocysteine. Functionally, specifically methylates the N7 position of guanine in position 527 of 16S rRNA. In Methylibium petroleiphilum (strain ATCC BAA-1232 / LMG 22953 / PM1), this protein is Ribosomal RNA small subunit methyltransferase G.